The following is a 718-amino-acid chain: Peroxisomal bifunctional enzyme (718 aa).

The tract at residues 1-280 (MAEYLRLPHS…FAEKSANKWS (280 aa)) is enoyl-CoA hydratase / isomerase. Residue Lys-38 is modified to N6-succinyllysine. Gly-99 provides a ligand contact to substrate. Lys-163 and Lys-172 each carry N6-acetyllysine; alternate. N6-succinyllysine; alternate is present on residues Lys-163 and Lys-172. Lys-181 carries the post-translational modification N6-succinyllysine. Lys-189 and Lys-217 each carry N6-acetyllysine; alternate. Lys-189 and Lys-217 each carry N6-succinyllysine; alternate. Lys-240 bears the N6-succinyllysine mark. Lys-248 carries the N6-acetyllysine modification. Position 252 is an N6-succinyllysine (Lys-252). Lys-274 is subject to N6-acetyllysine; alternate. Lys-274 carries the N6-succinyllysine; alternate modification. N6-succinyllysine is present on residues Lys-278, Lys-288, and Lys-329. The 3-hydroxyacyl-CoA dehydrogenase stretch occupies residues 281–567 (TPSGASWKTA…DMLCEAGRFG (287 aa)). Lys-344, Lys-348, Lys-355, and Lys-459 each carry N6-acetyllysine. Lys-527 bears the N6-succinyllysine mark. Phosphothreonine is present on Thr-543. An N6-succinyllysine modification is found at Lys-572. An N6-acetyllysine; alternate mark is found at Lys-579, Lys-586, and Lys-705. Residues Lys-579, Lys-586, and Lys-705 each carry the N6-succinyllysine; alternate modification. Residues 716–718 (SKL) carry the Microbody targeting signal motif. Position 717 is an N6-succinyllysine (Lys-717).

This sequence in the N-terminal section; belongs to the enoyl-CoA hydratase/isomerase family. In the C-terminal section; belongs to the 3-hydroxyacyl-CoA dehydrogenase family. Monomer. Acetylated, leading to enhanced enzyme activity. Acetylation is enhanced by up to 80% after treatment either with trichostin A (TCA) or with nicotinamide (NAM) with highest increase on Lys-344. Acetylation and enzyme activity increased by about 1.5% on addition of fatty acids.

The protein resides in the peroxisome. The enzyme catalyses a (3S)-3-hydroxyacyl-CoA = a (2E)-enoyl-CoA + H2O. The catalysed reaction is a 4-saturated-(3S)-3-hydroxyacyl-CoA = a (3E)-enoyl-CoA + H2O. It carries out the reaction a (3Z)-enoyl-CoA = a 4-saturated (2E)-enoyl-CoA. It catalyses the reaction a (3E)-enoyl-CoA = a 4-saturated (2E)-enoyl-CoA. The enzyme catalyses a (3S)-3-hydroxyacyl-CoA + NAD(+) = a 3-oxoacyl-CoA + NADH + H(+). The catalysed reaction is (2S,3S)-3-hydroxy-2-methylbutanoyl-CoA = (2E)-2-methylbut-2-enoyl-CoA + H2O. It carries out the reaction (2E)-dodecenedioyl-CoA + H2O = (3S)-hydroxydodecanedioyl-CoA. It catalyses the reaction (3S)-hydroxydodecanedioyl-CoA + NAD(+) = 3-oxododecanedioyl-CoA + NADH + H(+). The enzyme catalyses (2E)-octenedioyl-CoA + H2O = (3S)-hydroxyoctanedioyl-CoA. The catalysed reaction is (3S)-hydroxyoctanedioyl-CoA + NAD(+) = 3-oxooctanedioyl-CoA + NADH + H(+). It carries out the reaction (2E)-decenedioyl-CoA + H2O = (3S)-hydroxydecanedioyl-CoA. It catalyses the reaction (3S)-hydroxydecanedioyl-CoA + NAD(+) = 3-oxodecanedioyl-CoA + NADH + H(+). The enzyme catalyses (2E)-tetradecenedioyl-CoA + H2O = (3S)-hydroxytetradecanedioyl-CoA. The catalysed reaction is (3S)-hydroxytetradecanedioyl-CoA + NAD(+) = 3-oxotetradecanedioyl-CoA + NADH + H(+). It carries out the reaction (3E,5Z)-tetradecadienoyl-CoA = (2E,5Z)-tetradecadienoyl-CoA. It catalyses the reaction (3E,5Z)-octadienoyl-CoA = (2E,5Z)-octadienoyl-CoA. The enzyme catalyses (3S)-hydroxydecanoyl-CoA + NAD(+) = 3-oxodecanoyl-CoA + NADH + H(+). The catalysed reaction is (3E)-decenoyl-CoA = (2E)-decenoyl-CoA. It carries out the reaction (3Z)-hexenoyl-CoA = (2E)-hexenoyl-CoA. It catalyses the reaction (3E)-hexenoyl-CoA = (2E)-hexenoyl-CoA. The enzyme catalyses (3S)-hydroxydecanoyl-CoA = (2E)-decenoyl-CoA + H2O. The catalysed reaction is (3S)-hydroxyhexanoyl-CoA = (2E)-hexenoyl-CoA + H2O. It carries out the reaction (3S)-hydroxyhexadecanoyl-CoA + NAD(+) = 3-oxohexadecanoyl-CoA + NADH + H(+). It catalyses the reaction (3S)-hydroxyhexadecanoyl-CoA = (2E)-hexadecenoyl-CoA + H2O. The enzyme catalyses (2E)-hexadecenedioyl-CoA + H2O = (3S)-hydroxyhexadecanedioyl-CoA. The catalysed reaction is (3S)-hydroxyhexadecanedioyl-CoA + NAD(+) = 3-oxohexadecanedioyl-CoA + NADH + H(+). Its pathway is lipid metabolism; fatty acid beta-oxidation. With respect to regulation, enzyme activity enhanced by acetylation. Functionally, peroxisomal trifunctional enzyme possessing 2-enoyl-CoA hydratase, 3-hydroxyacyl-CoA dehydrogenase, and delta 3, delta 2-enoyl-CoA isomerase activities. Catalyzes two of the four reactions of the long chain fatty acids peroxisomal beta-oxidation pathway. Can also use branched-chain fatty acids such as 2-methyl-2E-butenoyl-CoA as a substrate, which is hydrated into (2S,3S)-3-hydroxy-2-methylbutanoyl-CoA. Optimal isomerase for 2,5 double bonds into 3,5 form isomerization in a range of enoyl-CoA species. Also able to isomerize both 3-cis and 3-trans double bonds into the 2-trans form in a range of enoyl-CoA species. With HSD17B4, catalyzes the hydration of trans-2-enoyl-CoA and the dehydrogenation of 3-hydroxyacyl-CoA, but with opposite chiral specificity. Regulates the amount of medium-chain dicarboxylic fatty acids which are essential regulators of all fatty acid oxidation pathways. Also involved in the degradation of long-chain dicarboxylic acids through peroxisomal beta-oxidation. The polypeptide is Peroxisomal bifunctional enzyme (Mus musculus (Mouse)).